We begin with the raw amino-acid sequence, 496 residues long: RNA-binding motif protein, Y chromosome, family 1 member E (496 aa).

One can recognise an RRM domain in the interval 8–85 (GKLFIGGLNR…KAIKVEQAKK (78 aa)). 2 disordered regions span residues 67 to 348 (DMNG…PHRD) and 453 to 496 (DQRN…SSRY). 2 stretches are compositionally biased toward low complexity: residues 97–114 (PASS…SARG) and 149–159 (PVKRGPSSRSG). Positions 175–184 (NSWMGSQGPM) are enriched in polar residues. 6 stretches are compositionally biased toward basic and acidic residues: residues 204 to 214 (RNDRMSTRHDG), 242 to 253 (DNGHSNRDEHSS), 276 to 289 (AYRD…DESY), 313 to 326 (GYRD…HESY), 335 to 348 (SSRE…PHRD), and 484 to 496 (GESR…SSRY).

As to quaternary structure, interacts with splicing factor proteins SFRS3/SRP20, TRA2B/SFRS10, KHDRBS1/SAM68 and KHDRBS3. In terms of tissue distribution, testis-specific.

It localises to the nucleus. In terms of biological role, RNA-binding protein which may be involved in spermatogenesis. Required for sperm development, possibly by participating in pre-mRNA splicing in the testis. In Homo sapiens (Human), this protein is RNA-binding motif protein, Y chromosome, family 1 member E (RBMY1E).